The following is a 110-amino-acid chain: NADH-quinone oxidoreductase subunit K (110 aa).

Transmembrane regions (helical) follow at residues 13-33 (VTHGLIFSILLFVISVAGIII), 38-58 (ILILLMSIELMLLAVNTNFLI), and 70-90 (VFVFFIMAVAAAETAIGLAIV).

Belongs to the complex I subunit 4L family. As to quaternary structure, NDH-1 is composed of 14 different subunits. Subunits NuoA, H, J, K, L, M, N constitute the membrane sector of the complex.

The protein localises to the cell inner membrane. The enzyme catalyses a quinone + NADH + 5 H(+)(in) = a quinol + NAD(+) + 4 H(+)(out). In terms of biological role, NDH-1 shuttles electrons from NADH, via FMN and iron-sulfur (Fe-S) centers, to quinones in the respiratory chain. The immediate electron acceptor for the enzyme in this species is believed to be ubiquinone. Couples the redox reaction to proton translocation (for every two electrons transferred, four hydrogen ions are translocated across the cytoplasmic membrane), and thus conserves the redox energy in a proton gradient. The protein is NADH-quinone oxidoreductase subunit K of Francisella tularensis subsp. holarctica (strain FTNF002-00 / FTA).